The chain runs to 282 residues: 4-hydroxy-3-methylbut-2-enyl diphosphate reductase (282 aa).

Cys-12 is a [4Fe-4S] cluster binding site. Residues His-40 and His-72 each contribute to the (2E)-4-hydroxy-3-methylbut-2-enyl diphosphate site. Residues His-40 and His-72 each coordinate dimethylallyl diphosphate. Residues His-40 and His-72 each coordinate isopentenyl diphosphate. Residue Cys-94 participates in [4Fe-4S] cluster binding. His-122 serves as a coordination point for (2E)-4-hydroxy-3-methylbut-2-enyl diphosphate. His-122 contacts dimethylallyl diphosphate. Residue His-122 participates in isopentenyl diphosphate binding. Catalysis depends on Glu-124, which acts as the Proton donor. Thr-160 contributes to the (2E)-4-hydroxy-3-methylbut-2-enyl diphosphate binding site. Cys-188 is a binding site for [4Fe-4S] cluster. (2E)-4-hydroxy-3-methylbut-2-enyl diphosphate contacts are provided by Ser-216, Asn-218, and Ser-260. Residues Ser-216, Asn-218, and Ser-260 each contribute to the dimethylallyl diphosphate site. Isopentenyl diphosphate contacts are provided by Ser-216, Asn-218, and Ser-260.

The protein belongs to the IspH family. The cofactor is [4Fe-4S] cluster.

The enzyme catalyses isopentenyl diphosphate + 2 oxidized [2Fe-2S]-[ferredoxin] + H2O = (2E)-4-hydroxy-3-methylbut-2-enyl diphosphate + 2 reduced [2Fe-2S]-[ferredoxin] + 2 H(+). It catalyses the reaction dimethylallyl diphosphate + 2 oxidized [2Fe-2S]-[ferredoxin] + H2O = (2E)-4-hydroxy-3-methylbut-2-enyl diphosphate + 2 reduced [2Fe-2S]-[ferredoxin] + 2 H(+). The protein operates within isoprenoid biosynthesis; dimethylallyl diphosphate biosynthesis; dimethylallyl diphosphate from (2E)-4-hydroxy-3-methylbutenyl diphosphate: step 1/1. Its pathway is isoprenoid biosynthesis; isopentenyl diphosphate biosynthesis via DXP pathway; isopentenyl diphosphate from 1-deoxy-D-xylulose 5-phosphate: step 6/6. Its function is as follows. Catalyzes the conversion of 1-hydroxy-2-methyl-2-(E)-butenyl 4-diphosphate (HMBPP) into a mixture of isopentenyl diphosphate (IPP) and dimethylallyl diphosphate (DMAPP). Acts in the terminal step of the DOXP/MEP pathway for isoprenoid precursor biosynthesis. This chain is 4-hydroxy-3-methylbut-2-enyl diphosphate reductase, found in Geobacter sulfurreducens (strain ATCC 51573 / DSM 12127 / PCA).